A 37-amino-acid polypeptide reads, in one-letter code: uncharacterized protein (37 aa).

The helical transmembrane segment at 17–37 (TFVLIVVLFILLIIVGAAFIC) threads the bilayer.

Belongs to the SscA family.

The protein localises to the membrane. This is an uncharacterized protein from Bacillus subtilis (strain 168).